Reading from the N-terminus, the 347-residue chain is 3-isopropylmalate dehydrogenase (347 aa).

Substrate is bound by residues Arg-95, Arg-105, Arg-129, and Asp-220. Positions 220, 244, and 248 each coordinate Mg(2+). 280–292 (GSAPDIAGQGKAD) contacts NAD(+).

It belongs to the isocitrate and isopropylmalate dehydrogenases family. LeuB type 2 subfamily. As to quaternary structure, homodimer. It depends on Mg(2+) as a cofactor. Requires Mn(2+) as cofactor.

Its subcellular location is the cytoplasm. It carries out the reaction (2R,3S)-3-isopropylmalate + NAD(+) = 4-methyl-2-oxopentanoate + CO2 + NADH. Its pathway is amino-acid biosynthesis; L-leucine biosynthesis; L-leucine from 3-methyl-2-oxobutanoate: step 3/4. In terms of biological role, catalyzes the oxidation of 3-carboxy-2-hydroxy-4-methylpentanoate (3-isopropylmalate) to 3-carboxy-4-methyl-2-oxopentanoate. The product decarboxylates to 4-methyl-2 oxopentanoate. This is 3-isopropylmalate dehydrogenase from Beutenbergia cavernae (strain ATCC BAA-8 / DSM 12333 / CCUG 43141 / JCM 11478 / NBRC 16432 / NCIMB 13614 / HKI 0122).